The sequence spans 410 residues: Putative nickel insertion protein (410 aa).

Belongs to the LarC family.

The protein is Putative nickel insertion protein of Cyanothece sp. (strain PCC 7425 / ATCC 29141).